Consider the following 308-residue polypeptide: Aspartate carbamoyltransferase catalytic subunit (308 aa).

Positions 58 and 59 each coordinate carbamoyl phosphate. Lys86 contributes to the L-aspartate binding site. Residues Arg108, His136, and Gln139 each coordinate carbamoyl phosphate. The L-aspartate site is built by Arg169 and Arg222. Residues Gly264 and Pro265 each coordinate carbamoyl phosphate.

The protein belongs to the aspartate/ornithine carbamoyltransferase superfamily. ATCase family. In terms of assembly, heterododecamer (2C3:3R2) of six catalytic PyrB chains organized as two trimers (C3), and six regulatory PyrI chains organized as three dimers (R2).

It carries out the reaction carbamoyl phosphate + L-aspartate = N-carbamoyl-L-aspartate + phosphate + H(+). It functions in the pathway pyrimidine metabolism; UMP biosynthesis via de novo pathway; (S)-dihydroorotate from bicarbonate: step 2/3. Catalyzes the condensation of carbamoyl phosphate and aspartate to form carbamoyl aspartate and inorganic phosphate, the committed step in the de novo pyrimidine nucleotide biosynthesis pathway. This is Aspartate carbamoyltransferase catalytic subunit from Campylobacter hominis (strain ATCC BAA-381 / DSM 21671 / CCUG 45161 / LMG 19568 / NCTC 13146 / CH001A).